The sequence spans 226 residues: Ribonuclease 3 (226 aa).

Positions 2 to 129 (IESISKIIKY…LIGAIYLDGG (128 aa)) constitute an RNase III domain. Glutamate 42 lines the Mg(2+) pocket. Residue aspartate 46 is part of the active site. Positions 115 and 118 each coordinate Mg(2+). The active site involves glutamate 118. Residues 154-223 (DAKTILQELV…ASLMLNQIHN (70 aa)) form the DRBM domain.

Belongs to the ribonuclease III family. Homodimer. Mg(2+) is required as a cofactor.

It localises to the cytoplasm. The catalysed reaction is Endonucleolytic cleavage to 5'-phosphomonoester.. In terms of biological role, digests double-stranded RNA. Involved in the processing of primary rRNA transcript to yield the immediate precursors to the large and small rRNAs (23S and 16S). Processes some mRNAs, and tRNAs when they are encoded in the rRNA operon. Processes pre-crRNA and tracrRNA of type II CRISPR loci if present in the organism. The chain is Ribonuclease 3 from Ehrlichia chaffeensis (strain ATCC CRL-10679 / Arkansas).